The primary structure comprises 299 residues: UDP-N-acetylenolpyruvoylglucosamine reductase (299 aa).

Residues 28 to 193 (IGGPVDLMVL…VSALMQLHKE (166 aa)) enclose the FAD-binding PCMH-type domain. Residue Arg-172 is part of the active site. The Proton donor role is filled by Ser-222. Residue Glu-292 is part of the active site.

It belongs to the MurB family. FAD is required as a cofactor.

It localises to the cytoplasm. The enzyme catalyses UDP-N-acetyl-alpha-D-muramate + NADP(+) = UDP-N-acetyl-3-O-(1-carboxyvinyl)-alpha-D-glucosamine + NADPH + H(+). Its pathway is cell wall biogenesis; peptidoglycan biosynthesis. Functionally, cell wall formation. This Syntrophomonas wolfei subsp. wolfei (strain DSM 2245B / Goettingen) protein is UDP-N-acetylenolpyruvoylglucosamine reductase.